A 501-amino-acid polypeptide reads, in one-letter code: Glucose-6-phosphate exchanger SLC37A2 (501 aa).

Residues 19 to 39 (SWFRGLILLLTFLIYACYHMS) form a helical membrane-spanning segment. 3 N-linked (GlcNAc...) asparagine glycosylation sites follow: Asn53, Asn62, and Asn68. Helical transmembrane passes span 88–108 (GGVDNAFLIAYAIGMFISGVF), 118–138 (LSAGMLLSGLFTSLFGLGYFW), 145–165 (YFVVIQVCNGLVQTTGWPSVV), 189–209 (SVGNILGSLIAGIWVNGQWGL), and 210–230 (SFIVPGIITAVMGVITFLFLI). The interval 240-262 (PPQHHGEPAENQDNPEDPGNSPC) is disordered. Helical transmembrane passes span 302-322 (LCLLFAKLVSYTFLYWLPLYI), 334-354 (GDLSTLFDVGGIIGGIVAGLV), 362-382 (ATTCCVMLILAAPMMFLYNYI), 391-411 (IVMLIICGGLVNGPYALITTA), 434-454 (AIIDGTGSIGAALGPLLAGLI), and 462-482 (VFYMLISADVLACLLLCRLVY).

The protein belongs to the major facilitator superfamily. Organophosphate:Pi antiporter (OPA) (TC 2.A.1.4) family. Detected in intestine and pancreas. Lower expression is also detected in liver and kidney.

It is found in the endoplasmic reticulum membrane. The catalysed reaction is D-glucose 6-phosphate(in) + phosphate(out) = D-glucose 6-phosphate(out) + phosphate(in). Its activity is regulated as follows. Inhibited by vanadate but not by chlorogenic acid. In terms of biological role, inorganic phosphate and glucose-6-phosphate antiporter. May transport cytoplasmic glucose-6-phosphate into the lumen of the endoplasmic reticulum and translocate inorganic phosphate into the opposite direction. Independent of a lumenal glucose-6-phosphatase. May not play a role in homeostatic regulation of blood glucose levels. This is Glucose-6-phosphate exchanger SLC37A2 from Homo sapiens (Human).